Here is a 162-residue protein sequence, read N- to C-terminus: SsrA-binding protein (162 aa).

The span at 137 to 154 shows a compositional bias: basic and acidic residues; sequence HDKREDTKAREWDREKAR. A disordered region spans residues 137-162; sequence HDKREDTKAREWDREKARIMKNKHRG.

Belongs to the SmpB family.

It is found in the cytoplasm. Required for rescue of stalled ribosomes mediated by trans-translation. Binds to transfer-messenger RNA (tmRNA), required for stable association of tmRNA with ribosomes. tmRNA and SmpB together mimic tRNA shape, replacing the anticodon stem-loop with SmpB. tmRNA is encoded by the ssrA gene; the 2 termini fold to resemble tRNA(Ala) and it encodes a 'tag peptide', a short internal open reading frame. During trans-translation Ala-aminoacylated tmRNA acts like a tRNA, entering the A-site of stalled ribosomes, displacing the stalled mRNA. The ribosome then switches to translate the ORF on the tmRNA; the nascent peptide is terminated with the 'tag peptide' encoded by the tmRNA and targeted for degradation. The ribosome is freed to recommence translation, which seems to be the essential function of trans-translation. This Aeromonas salmonicida (strain A449) protein is SsrA-binding protein.